A 293-amino-acid chain; its full sequence is Undecaprenyl-diphosphatase (293 aa).

8 consecutive transmembrane segments (helical) span residues Ile3–Pro23, Lys43–Phe63, Ala85–Ile105, Leu109–Ala129, Phe178–Gly198, Val203–Glu223, Ile238–Leu258, and Phe269–Val289.

It belongs to the UppP family.

The protein resides in the cell inner membrane. It catalyses the reaction di-trans,octa-cis-undecaprenyl diphosphate + H2O = di-trans,octa-cis-undecaprenyl phosphate + phosphate + H(+). Functionally, catalyzes the dephosphorylation of undecaprenyl diphosphate (UPP). Confers resistance to bacitracin. This chain is Undecaprenyl-diphosphatase, found in Cupriavidus necator (strain ATCC 17699 / DSM 428 / KCTC 22496 / NCIMB 10442 / H16 / Stanier 337) (Ralstonia eutropha).